The sequence spans 209 residues: MNNLDLSLYLVTNNSEDEEKFLNIIEESLKGGVSVVQLREKKAETLDFYNLALKVKEITQKYNVPLIINDRIDIALAIDADGVHVGQSDMPAKTARSMIGEDKILGVSAANIKEAKKAQRESADYIGVGAVYPTNTKDDATSVPKKELKEIVKSVDIPVVAIGGITQENAHELNDCGIDGLSVVSAIMEAKNPKIASENLLKEFKAKNS.

Residues 37–41 and Asn69 each bind 4-amino-2-methyl-5-(diphosphooxymethyl)pyrimidine; that span reads QLREK. Mg(2+)-binding residues include Asp70 and Asp89. Residue Ser108 coordinates 4-amino-2-methyl-5-(diphosphooxymethyl)pyrimidine. 134–136 provides a ligand contact to 2-[(2R,5Z)-2-carboxy-4-methylthiazol-5(2H)-ylidene]ethyl phosphate; it reads TNT. Lys137 provides a ligand contact to 4-amino-2-methyl-5-(diphosphooxymethyl)pyrimidine. 2-[(2R,5Z)-2-carboxy-4-methylthiazol-5(2H)-ylidene]ethyl phosphate is bound by residues Gly164 and 184–185; that span reads VS.

It belongs to the thiamine-phosphate synthase family. It depends on Mg(2+) as a cofactor.

The enzyme catalyses 2-[(2R,5Z)-2-carboxy-4-methylthiazol-5(2H)-ylidene]ethyl phosphate + 4-amino-2-methyl-5-(diphosphooxymethyl)pyrimidine + 2 H(+) = thiamine phosphate + CO2 + diphosphate. It carries out the reaction 2-(2-carboxy-4-methylthiazol-5-yl)ethyl phosphate + 4-amino-2-methyl-5-(diphosphooxymethyl)pyrimidine + 2 H(+) = thiamine phosphate + CO2 + diphosphate. The catalysed reaction is 4-methyl-5-(2-phosphooxyethyl)-thiazole + 4-amino-2-methyl-5-(diphosphooxymethyl)pyrimidine + H(+) = thiamine phosphate + diphosphate. Its pathway is cofactor biosynthesis; thiamine diphosphate biosynthesis; thiamine phosphate from 4-amino-2-methyl-5-diphosphomethylpyrimidine and 4-methyl-5-(2-phosphoethyl)-thiazole: step 1/1. Its function is as follows. Condenses 4-methyl-5-(beta-hydroxyethyl)thiazole monophosphate (THZ-P) and 2-methyl-4-amino-5-hydroxymethyl pyrimidine pyrophosphate (HMP-PP) to form thiamine monophosphate (TMP). This chain is Thiamine-phosphate synthase, found in Methanobrevibacter smithii (strain ATCC 35061 / DSM 861 / OCM 144 / PS).